The sequence spans 720 residues: Casein kinase II subunit alpha'-interacting protein (720 aa).

Positions 227–249 are enriched in polar residues; that stretch reads LSSPSFTNRLQRNSFPPTSSSLE. Disordered stretches follow at residues 227–250, 264–303, 333–366, 602–640, and 678–698; these read LSSPSFTNRLQRNSFPPTSSSLEF, KPLKIPVSNSNNNVFSLPLSPAKSRKSTPSPHSFLPSRRL, QNTASLSDKQRPRQLPSIHPKPNPSGQRVSSPKP, TQVQGPSSSSSSSCSSVSSSSSASSIGRPSPPTPWVDPT, and LRQSPPVKAKPVRSHNSKCLK. Over residues 608–626 the composition is skewed to low complexity; sequence SSSSSSSCSSVSSSSSASS. Over residues 630-640 the composition is skewed to pro residues; sequence PSPPTPWVDPT. A compositionally biased stretch (basic residues) spans 687–698; it reads KPVRSHNSKCLK.

As to quaternary structure, interacts (via C-terminus) with CSNK2A2. Post-translationally, phosphorylated by CK2 (casein kinase II), specifically by complexes containing catalytic subunit CSNK2A2. Expressed exclusively in testis (at protein level). Within testis, expressed mainly in the intermediate compartment of the seminiferous tubules with weaker expression in the basal and adluminal compartments.

It localises to the nucleus. May play a role in chromatin regulation of male germ cells. This is Casein kinase II subunit alpha'-interacting protein from Mus musculus (Mouse).